The following is a 262-amino-acid chain: Phosphomannomutase 1 (262 aa).

Alanine 2 carries the post-translational modification N-acetylalanine. The active-site Nucleophile is the aspartate 19. Mg(2+)-binding residues include aspartate 19 and aspartate 21. The active-site Proton donor/acceptor is aspartate 21. Residues arginine 28, arginine 132, arginine 143, arginine 150, methionine 186, serine 188, and aspartate 190 each coordinate alpha-D-mannose 1-phosphate. Residues asparagine 218, tyrosine 230, aspartate 232, and threonine 235 each coordinate Mg(2+). The residue at position 242 (serine 242) is a Phosphoserine.

This sequence belongs to the eukaryotic PMM family. In terms of assembly, homodimer. The cofactor is Mg(2+). In terms of tissue distribution, present in brain, where it is restricted to neuronal cell bodies. Present at lower levels in pancreas, liver, lung, gonads, uterus, adrenal glands and pituitary (at protein level). Undetectable in intestine.

Its subcellular location is the cytoplasm. It catalyses the reaction alpha-D-mannose 1-phosphate = D-mannose 6-phosphate. It functions in the pathway nucleotide-sugar biosynthesis; GDP-alpha-D-mannose biosynthesis; alpha-D-mannose 1-phosphate from D-fructose 6-phosphate: step 2/2. IMP, a metabolite whose concentration is elevated in anoxia, inhibits phosphomannomutase and phosphoglucomutase activities and strongly enhances glucose-1,6-bisphosphatase activity. In terms of biological role, involved in the synthesis of the GDP-mannose and dolichol-phosphate-mannose required for a number of critical mannosyl transfer reactions. In addition, may be responsible for the degradation of glucose-1,6-bisphosphate in ischemic brain. This chain is Phosphomannomutase 1 (Pmm1), found in Mus musculus (Mouse).